The primary structure comprises 248 residues: MAGHSQFKNIMHRKGRVDAVRSKVFSKLAREITVAAKLGTPDPSMNPRLRAAILAARAENMPKDNIERAIKKAVGNDGENYEEIRYEGYGPGGAALIVEAQTDNRNRTASDVRSAFTKSGGSLAETGAVAFMFDRVGVIAFAADVADADTMLEAAIEAGADDVRSDADGHEITCAQDAYGEVSKALEARFGEPRRTGLIWKAQNTIDVDDETGEKLIRLVEVIEDQDDVQNVYVNFALSDALVEKMGA.

This sequence belongs to the TACO1 family.

The protein localises to the cytoplasm. The polypeptide is Probable transcriptional regulatory protein Mpop_0922 (Methylorubrum populi (strain ATCC BAA-705 / NCIMB 13946 / BJ001) (Methylobacterium populi)).